The sequence spans 264 residues: Hydroxyethylthiazole kinase (264 aa).

A substrate-binding site is contributed by methionine 43. Arginine 119 and threonine 165 together coordinate ATP. Glycine 192 is a binding site for substrate.

This sequence belongs to the Thz kinase family. Mg(2+) serves as cofactor.

The catalysed reaction is 5-(2-hydroxyethyl)-4-methylthiazole + ATP = 4-methyl-5-(2-phosphooxyethyl)-thiazole + ADP + H(+). It participates in cofactor biosynthesis; thiamine diphosphate biosynthesis; 4-methyl-5-(2-phosphoethyl)-thiazole from 5-(2-hydroxyethyl)-4-methylthiazole: step 1/1. Functionally, catalyzes the phosphorylation of the hydroxyl group of 4-methyl-5-beta-hydroxyethylthiazole (THZ). This is Hydroxyethylthiazole kinase from Anoxybacillus flavithermus (strain DSM 21510 / WK1).